A 587-amino-acid polypeptide reads, in one-letter code: D-lactate dehydrogenase [cytochrome] 1, mitochondrial (587 aa).

Residues 146-327 form the FAD-binding PCMH-type domain; it reads SPEQRPRIIL…TEATVKCHVK (182 aa).

The protein belongs to the FAD-binding oxidoreductase/transferase type 4 family. The cofactor is FAD.

Its subcellular location is the mitochondrion inner membrane. It carries out the reaction (R)-lactate + 2 Fe(III)-[cytochrome c] = 2 Fe(II)-[cytochrome c] + pyruvate + 2 H(+). Functionally, catalyzes the stereospecific oxidation of D-lactate to pyruvate. The polypeptide is D-lactate dehydrogenase [cytochrome] 1, mitochondrial (Saccharomyces cerevisiae (strain ATCC 204508 / S288c) (Baker's yeast)).